A 338-amino-acid polypeptide reads, in one-letter code: Tryptophan--tRNA ligase (338 aa).

Residues 11-13 and 19-20 contribute to the ATP site; these read QPS and GN. The 'HIGH' region signature appears at 12–20; the sequence is PSGELSIGN. L-tryptophan is bound at residue Asp-135. Residues 147–149, Val-189, and 198–202 contribute to the ATP site; these read GSD and KMSKS. The short motif at 198-202 is the 'KMSKS' region element; that stretch reads KMSKS.

The protein belongs to the class-I aminoacyl-tRNA synthetase family. Homodimer.

It is found in the cytoplasm. The enzyme catalyses tRNA(Trp) + L-tryptophan + ATP = L-tryptophyl-tRNA(Trp) + AMP + diphosphate + H(+). In terms of biological role, catalyzes the attachment of tryptophan to tRNA(Trp). This chain is Tryptophan--tRNA ligase, found in Vibrio cholerae serotype O1 (strain ATCC 39315 / El Tor Inaba N16961).